A 336-amino-acid chain; its full sequence is Phosphate acyltransferase (336 aa).

It belongs to the PlsX family. As to quaternary structure, homodimer. Probably interacts with PlsY.

The protein resides in the cytoplasm. It carries out the reaction a fatty acyl-[ACP] + phosphate = an acyl phosphate + holo-[ACP]. Its pathway is lipid metabolism; phospholipid metabolism. Functionally, catalyzes the reversible formation of acyl-phosphate (acyl-PO(4)) from acyl-[acyl-carrier-protein] (acyl-ACP). This enzyme utilizes acyl-ACP as fatty acyl donor, but not acyl-CoA. This chain is Phosphate acyltransferase, found in Pseudomonas putida (strain ATCC 47054 / DSM 6125 / CFBP 8728 / NCIMB 11950 / KT2440).